Reading from the N-terminus, the 105-residue chain is Nucleoid-associated protein RPC_4847 (105 aa).

The protein belongs to the YbaB/EbfC family. In terms of assembly, homodimer.

The protein resides in the cytoplasm. It is found in the nucleoid. Its function is as follows. Binds to DNA and alters its conformation. May be involved in regulation of gene expression, nucleoid organization and DNA protection. The protein is Nucleoid-associated protein RPC_4847 of Rhodopseudomonas palustris (strain BisB18).